The primary structure comprises 287 residues: Probable endonuclease 4 (287 aa).

The Zn(2+) site is built by His69, His109, Glu144, Asp178, His181, His215, Asp228, His230, and Glu260.

Belongs to the AP endonuclease 2 family. It depends on Zn(2+) as a cofactor.

It catalyses the reaction Endonucleolytic cleavage to 5'-phosphooligonucleotide end-products.. Endonuclease IV plays a role in DNA repair. It cleaves phosphodiester bonds at apurinic or apyrimidinic (AP) sites, generating a 3'-hydroxyl group and a 5'-terminal sugar phosphate. The chain is Probable endonuclease 4 from Thermotoga maritima (strain ATCC 43589 / DSM 3109 / JCM 10099 / NBRC 100826 / MSB8).